A 132-amino-acid chain; its full sequence is MAKPKKKVTRIRRRERKNIERGHAHIQSTFNNTIITLTDVHGNAISWASSGQLGFKGSRKSTPFASQMAAETAAKAAMEHGLKSVEVFVKGPGSGREAAIRALQATGLEVTMIKDVTPIPHNGCRPPKRRRV.

This sequence belongs to the universal ribosomal protein uS11 family. As to quaternary structure, part of the 30S ribosomal subunit. Interacts with proteins S7 and S18. Binds to IF-3.

Located on the platform of the 30S subunit, it bridges several disparate RNA helices of the 16S rRNA. Forms part of the Shine-Dalgarno cleft in the 70S ribosome. The protein is Small ribosomal subunit protein uS11 of Clostridioides difficile (strain 630) (Peptoclostridium difficile).